We begin with the raw amino-acid sequence, 280 residues long: Trypsin zeta (280 aa).

An N-terminal signal peptide occupies residues 1–22; sequence MSSSWIVGLLAFLVSLVALTQG. Residues 23-38 constitute a propeptide, activation peptide; sequence LPLLEDLDEKSVPDGR. Residues 39 to 278 form the Peptidase S1 domain; the sequence is IVGGYATDIA…LRPWIDAVLA (240 aa). Cysteine 72 and cysteine 88 are disulfide-bonded. Catalysis depends on charge relay system residues histidine 87 and aspartate 134. 2 cysteine pairs are disulfide-bonded: cysteine 198–cysteine 218 and cysteine 230–cysteine 254. The active-site Charge relay system is serine 234.

Belongs to the peptidase S1 family.

The protein resides in the secreted. Its subcellular location is the extracellular space. It catalyses the reaction Preferential cleavage: Arg-|-Xaa, Lys-|-Xaa.. The protein is Trypsin zeta (zetaTry) of Drosophila melanogaster (Fruit fly).